Consider the following 328-residue polypeptide: Malate dehydrogenase 2 (328 aa).

NAD(+) is bound at residue Gly-12 to Ala-18. Substrate-binding residues include Arg-93 and Arg-99. Residues Asn-106, Gln-113, and Val-130 to Asn-132 each bind NAD(+). Substrate contacts are provided by Asn-132 and Arg-163. His-188 serves as the catalytic Proton acceptor.

This sequence belongs to the LDH/MDH superfamily. MDH type 2 family.

It catalyses the reaction (S)-malate + NAD(+) = oxaloacetate + NADH + H(+). Its function is as follows. Catalyzes the reversible oxidation of malate to oxaloacetate. This chain is Malate dehydrogenase 2, found in Burkholderia vietnamiensis (strain G4 / LMG 22486) (Burkholderia cepacia (strain R1808)).